The following is a 281-amino-acid chain: AT-hook motif nuclear-localized protein 20 (281 aa).

Disordered regions lie at residues 43 to 85 (MNQS…APIF) and 216 to 247 (MEEE…DLSG). The a.T hook DNA-binding region spans 67–79 (RRPRGRPPGSKNK). In terms of domain architecture, PPC spans 91–229 (PNALRSHVLE…EDGGGSRQIH (139 aa)).

Its subcellular location is the nucleus. Its function is as follows. Transcription factor that specifically binds AT-rich DNA sequences related to the nuclear matrix attachment regions (MARs). Negatively regulates plant innate immunity (PTI) to pathogens through the down-regulation of the PAMP-triggered NHO1 and FRK1 expression. The sequence is that of AT-hook motif nuclear-localized protein 20 from Arabidopsis thaliana (Mouse-ear cress).